Consider the following 562-residue polypeptide: Putative transport protein Spro_1639 (562 aa).

The next 5 helical transmembrane spans lie at 8-28, 37-57, 66-86, 94-114, and 158-178; these read LLNGNYILLLFVVLALGLCLG, LGNSIGVLVVSLLLGQQHFAI, FMLFIFCVGVEAGPNFFSIFF, MLALVMVGSAMVIAIGLGKLF, and HLSLGYALTYLIGLVSLIFGA. RCK C-terminal domains lie at 202 to 288 and 290 to 373; these read LDTD…SFRN and KEVF…KIGF. Helical transmembrane passes span 383–403, 406–426, 447–467, 475–495, and 541–561; these read LLAFCAFFIIGLLIGQITIQF, FSFGIGNAAGLLMAGIMLGFL, FGLMVFMAGVGLSAGAGIGNS, MLIAGLIVSLVPVVICFLFGA, and IANVLLTLAGSLIVVLWPGIL.

Belongs to the AAE transporter (TC 2.A.81) family. YbjL subfamily.

Its subcellular location is the cell membrane. The sequence is that of Putative transport protein Spro_1639 from Serratia proteamaculans (strain 568).